Consider the following 169-residue polypeptide: Cell division inhibitor SulA (169 aa).

Residues 106–112 (ALRTGNY) are ftsZ binding. A lon protease binding region spans residues 162–169 (KIHSNLYH).

Belongs to the SulA family. As to quaternary structure, interacts with FtsZ. Is rapidly cleaved and degraded by the Lon protease once DNA damage is repaired.

Functionally, component of the SOS system and an inhibitor of cell division. Accumulation of SulA causes rapid cessation of cell division and the appearance of long, non-septate filaments. In the presence of GTP, binds a polymerization-competent form of FtsZ in a 1:1 ratio, thus inhibiting FtsZ polymerization and therefore preventing it from participating in the assembly of the Z ring. This mechanism prevents the premature segregation of damaged DNA to daughter cells during cell division. The chain is Cell division inhibitor SulA from Salmonella arizonae (strain ATCC BAA-731 / CDC346-86 / RSK2980).